Reading from the N-terminus, the 149-residue chain is Large ribosomal subunit protein bL9 (149 aa).

It belongs to the bacterial ribosomal protein bL9 family.

Functionally, binds to the 23S rRNA. This is Large ribosomal subunit protein bL9 from Actinobacillus pleuropneumoniae serotype 3 (strain JL03).